A 239-amino-acid chain; its full sequence is ATP-dependent dethiobiotin synthetase BioD (239 aa).

Residue 15-20 (EIGKTF) coordinates ATP. Threonine 19 serves as a coordination point for Mg(2+). Lysine 40 is a catalytic residue. ATP-binding positions include aspartate 57, 118 to 121 (EGVG), and 178 to 179 (NH). Residues aspartate 57 and glutamate 118 each coordinate Mg(2+).

It belongs to the dethiobiotin synthetase family. As to quaternary structure, homodimer. The cofactor is Mg(2+).

It is found in the cytoplasm. The catalysed reaction is (7R,8S)-7,8-diammoniononanoate + CO2 + ATP = (4R,5S)-dethiobiotin + ADP + phosphate + 3 H(+). The protein operates within cofactor biosynthesis; biotin biosynthesis; biotin from 7,8-diaminononanoate: step 1/2. Its function is as follows. Catalyzes a mechanistically unusual reaction, the ATP-dependent insertion of CO2 between the N7 and N8 nitrogen atoms of 7,8-diaminopelargonic acid (DAPA, also called 7,8-diammoniononanoate) to form a ureido ring. The sequence is that of ATP-dependent dethiobiotin synthetase BioD from Burkholderia ambifaria (strain ATCC BAA-244 / DSM 16087 / CCUG 44356 / LMG 19182 / AMMD) (Burkholderia cepacia (strain AMMD)).